The following is a 439-amino-acid chain: MKRAAMRLWTLNKGLLTHGRGLSQGSQYKISEPLHIHQVQVKLREIVGISTVWRDHVQAMEERKLLHSFLPKSQKVLPPRKIRDSYIEVLLPLGTDPELRDKYVTVQNTVRFGRILEDLDSLGVLVCYMHNHNHSTNMSLLSIVTVLVDKIDMCKHSLSPEQDIKFTGHVSWVGNTTMEVKMKMFQLHDDETYWPVLDATFVMVAQDSENKRPAFVNPLIPENKEEEELFTQGELNKSRRIAFSTSSLLKVAPSSEERNIIHELFLSTLDPKTISFQSRILPPKAVWMEDTKLKSLDICHPQERNVFNRIFGGFLMRKAYELAWATACSFGGSRPYVVTVDDIMFQKPVEVGSLLFLSSQVCFTQGNYIQVRVHSEVFSLDSREHMTTNVFHFTFMSEKEVPLIFPKTYGESMLYLDGQRHFKSMSTPVTLKKDYPVEP.

The transit peptide at 1 to 21 (MKRAAMRLWTLNKGLLTHGRG) directs the protein to the mitochondrion. HotDog ACOT-type domains follow at residues 85–209 (SYIE…QDSE) and 289–401 (EDTK…EKEV).

The protein belongs to the acyl coenzyme A hydrolase family.

The protein resides in the mitochondrion. Its function is as follows. Catalyzes the hydrolysis of acyl-CoAs into free fatty acids and coenzyme A (CoASH), regulating their respective intracellular levels. Active on long chain acyl-CoAs. The chain is Acyl-coenzyme A thioesterase 10, mitochondrial from Mus musculus (Mouse).